Reading from the N-terminus, the 647-residue chain is Paraneoplastic antigen Ma6E (647 aa).

Disordered regions lie at residues 111–199, 227–254, 508–580, and 608–647; these read QPQG…AGGA, GAAGEAGGAGEAGAAGEAGGAGEGRAAG, AAAP…VPWG, and RGQEARKPPLEGLQTILEEPENEDEDGAGDEGQPKSSQGK. 3 stretches are compositionally biased toward gly residues: residues 122–149, 158–199, and 227–251; these read GEGGGAGEAGGVGEVGAAGEAGGTGEAG, GEAG…AGGA, and GAAGEAGGAGEAGAAGEAGGAGEGR. Over residues 517 to 570 the composition is skewed to low complexity; sequence PAAAQASPAQGNASEAGPGAEDAAEAASATKEAARGAPAAGEGESAPAGPEGLG. Over residues 625-636 the composition is skewed to acidic residues; that stretch reads EEPENEDEDGAG.

The polypeptide is Paraneoplastic antigen Ma6E (Homo sapiens (Human)).